The sequence spans 1325 residues: Cyclic nucleotide-gated channel beta-1 (1325 aa).

Disordered regions lie at residues 1-124, 147-198, 227-279, 340-470, 482-637, and 659-694; these read MLGW…QVAV, PQPV…SLWL, AVLD…PGDP, WEDA…LDSC, LERT…SQNS, and KEKLIDPDVTSDEESPKPSPAKKAPEPDPAQKPAEA. Over 1–732 the chain is Cytoplasmic; sequence MLGWVQRVLP…SIDPLTNLMY (732 aa). Acidic residues predominate over residues 43–81; the sequence is PQQEPEPEPEPEPEPEPEPEPEPEPEPEPEPEPVPEEAP. A compositionally biased stretch (polar residues) spans 105–121; it reads LQETQVADPAQPTSQAQ. Over residues 370 to 379 the composition is skewed to basic and acidic residues; it reads IPRELTKIQE. Composition is skewed to acidic residues over residues 380 to 393, 418 to 463, and 495 to 517; these read EREDEQEEDEEEKE, EEKE…EEEP, and LPEEKEEKEEEKEEEKEEEEEKK. Residues 518–527 show a composition bias toward basic and acidic residues; sequence EEEVEKKEEG. Residues 560-571 are compositionally biased toward pro residues; it reads TLPPPERPPPSP. Residues 633-643 form a calmodulin-binding CaM1 region; the sequence is ASQNSAIINDR. The helical transmembrane segment at 733–754 threads the bilayer; it reads ILWLFFVVLAWNWNCWLIPVRW. The Extracellular portion of the chain corresponds to 755–763; the sequence is AFPYQRADN. A helical membrane pass occupies residues 764–785; it reads IHFWLLMDYLCDFIYLLDITVF. Over 786 to 800 the chain is Cytoplasmic; that stretch reads QMRLQFVKGGDIITD. The helical transmembrane segment at 801 to 820 threads the bilayer; it reads KKEMRNNYLKSRRFKMDLLC. Topologically, residues 821–836 are extracellular; sequence LLPLDFLYLKLGINPL. A helical membrane pass occupies residues 837 to 849; the sequence is LRLPRCLKYMAFF. The Cytoplasmic segment spans residues 850–861; that stretch reads EFNNRLEAILSK. A helical membrane pass occupies residues 862–884; sequence AYVYRVIRTTAYLLYSLHLNSCL. The ion conduction pathway stretch occupies residues 862-961; sequence AYVYRVIRTT…IGQMRDVVGA (100 aa). At 885 to 907 the chain is on the extracellular side; sequence YYWASAFQGIGSTHWVYDGVGNS. The next 2 membrane-spanning stretches (helical) occupy residues 908–934 and 935–960; these read YIRCYYWAVKTLITIGGLPDPQTLFEI and VFQLLNYFTGVFAFSVMIGQMRDVVG. Topologically, residues 961-1325 are cytoplasmic; it reads AATAGQTYYR…VLEEKKEGAE (365 aa). The C-linker stretch occupies residues 964–1040; that stretch reads AGQTYYRSCM…SIVSKVALFQ (77 aa). Positions 1038-1142 are cNMP-binding domain; it reads LFQGCDRQMI…LDKKDLNEIL (105 aa). Residues 1044 to 1160 form a cyclic nucleotide-binding domain region; that stretch reads RQMIFDMLKR…LLRKKARRML (117 aa). Positions 1105, 1106, 1108, 1118, and 1119 each coordinate 3',5'-cyclic GMP. Arg1118 is a binding site for 3',5'-cyclic AMP. Positions 1224–1230 are calmodulin-binding CaM2; that stretch reads QQQLLEQ. Residues 1226–1250 show a composition bias toward low complexity; that stretch reads QLLEQAKSSQEAGGEEGSGATDQPA. Residues 1226–1325 are disordered; sequence QLLEQAKSSQ…VLEEKKEGAE (100 aa). A compositionally biased stretch (pro residues) spans 1262-1279; the sequence is KPPGPPEPSAQSSPPPAS.

Belongs to the cyclic nucleotide-gated cation channel (TC 1.A.1.5) family. CNGB1 subfamily. In terms of tissue distribution, rod outer segments. Olfactory sensory neurons.

It is found in the cell projection. The protein localises to the cilium membrane. The catalysed reaction is Ca(2+)(in) = Ca(2+)(out). It catalyses the reaction Na(+)(in) = Na(+)(out). The enzyme catalyses K(+)(in) = K(+)(out). It carries out the reaction NH4(+)(in) = NH4(+)(out). The catalysed reaction is Rb(+)(in) = Rb(+)(out). It catalyses the reaction Li(+)(in) = Li(+)(out). The enzyme catalyses Cs(+)(in) = Cs(+)(out). Pore-forming subunit of the rod cyclic nucleotide-gated channel. Mediates rod photoresponses at dim light converting transient changes in intracellular cGMP levels into electrical signals. In the dark, cGMP levels are high and keep the channel open enabling a steady inward current carried by Na(+) and Ca(2+) ions that leads to membrane depolarization and neurotransmitter release from synaptic terminals. Upon photon absorption cGMP levels decline leading to channel closure and membrane hyperpolarization that ultimately slows neurotransmitter release and signals the presence of light, the end point of the phototransduction cascade. Pore-forming subunit of the olfactory cyclic nucleotide-gated channel. Operates in the cilia of olfactory sensory neurons where chemical stimulation of the odorant is converted to an electrical signal. Mediates odorant-induced cAMP-dependent Ca(2+) influx triggering neuron depolarization. The rise of intracellular Ca(2+) levels potentiates the olfactory response by activating Ca(2+)-dependent Cl(-) channels, but it also serves as a negative feedback signal to desensitize the channel for rapid adaptation to odorants. Conducts cGMP- and cAMP-gated ion currents, with permeability for monovalent and divalent cations. The selectivity for Ca(2+) over Na(+) increases with cGMP concentrations, whereas the selectivity among monovalent ions is independent of the cGMP levels. This Mus musculus (Mouse) protein is Cyclic nucleotide-gated channel beta-1.